A 152-amino-acid chain; its full sequence is Ribonuclease pancreatic (152 aa).

A signal peptide spans 1–24 (MALDKSVILLPLLVLVLLVLGCLG). K31 and R34 together coordinate substrate. Residue H36 is the Proton acceptor of the active site. N46 is a glycosylation site (N-linked (GlcNAc...) asparagine). 4 disulfides stabilise this stretch: C50/C108, C64/C119, C82/C134, and C89/C96. Substrate-binding positions include 65-69 (KPVNT), K90, and R109. The N-linked (GlcNAc...) asparagine glycan is linked to N112. The active-site Proton donor is H143.

Belongs to the pancreatic ribonuclease family. As to quaternary structure, monomer. Interacts with and forms tight 1:1 complexes with RNH1. Dimerization of two such complexes may occur. Interaction with RNH1 inhibits this protein.

Its subcellular location is the secreted. It carries out the reaction an [RNA] containing cytidine + H2O = an [RNA]-3'-cytidine-3'-phosphate + a 5'-hydroxy-ribonucleotide-3'-[RNA].. The enzyme catalyses an [RNA] containing uridine + H2O = an [RNA]-3'-uridine-3'-phosphate + a 5'-hydroxy-ribonucleotide-3'-[RNA].. In terms of biological role, endonuclease that catalyzes the cleavage of RNA on the 3' side of pyrimidine nucleotides. Acts on single-stranded and double-stranded RNA. This is Ribonuclease pancreatic (RNASE1) from Papio hamadryas (Hamadryas baboon).